We begin with the raw amino-acid sequence, 145 residues long: Superoxide dismutase [Mn/Fe] (145 aa).

His-10 and His-64 together coordinate Fe(3+). His-10 and His-64 together coordinate Mn(2+).

It belongs to the iron/manganese superoxide dismutase family. Requires Mn(2+) as cofactor. Fe(3+) is required as a cofactor.

The enzyme catalyses 2 superoxide + 2 H(+) = H2O2 + O2. Functionally, destroys superoxide anion radicals which are normally produced within the cells and which are toxic to biological systems. Catalyzes the dismutation of superoxide anion radicals into O2 and H2O2 by successive reduction and oxidation of the transition metal ion at the active site. The protein is Superoxide dismutase [Mn/Fe] (sodA) of Streptococcus parasanguinis.